Here is a 948-residue protein sequence, read N- to C-terminus: Protein translocase subunit SecA (948 aa).

ATP contacts are provided by residues glutamine 90, 108 to 112 (GEGKT), and aspartate 509.

The protein belongs to the SecA family. Monomer and homodimer. Part of the essential Sec protein translocation apparatus which comprises SecA, SecYEG and auxiliary proteins SecDF. Other proteins may also be involved.

Its subcellular location is the cell inner membrane. It is found in the cellular thylakoid membrane. The protein localises to the cytoplasm. It catalyses the reaction ATP + H2O + cellular proteinSide 1 = ADP + phosphate + cellular proteinSide 2.. In terms of biological role, part of the Sec protein translocase complex. Interacts with the SecYEG preprotein conducting channel. Has a central role in coupling the hydrolysis of ATP to the transfer of proteins into and across the cell membrane, serving as an ATP-driven molecular motor driving the stepwise translocation of polypeptide chains across the membrane. Functionally, probably participates in protein translocation into and across both the cytoplasmic and thylakoid membranes in cyanobacterial cells. The sequence is that of Protein translocase subunit SecA from Prochlorococcus marinus (strain MIT 9313).